The chain runs to 137 residues: Small ribosomal subunit protein eS6 (137 aa).

Positions 114-127 (LPVEEAPAEDAPES) are enriched in acidic residues. The segment at 114 to 137 (LPVEEAPAEDAPESAEEKSEDKKE) is disordered. The segment covering 128 to 137 (AEEKSEDKKE) has biased composition (basic and acidic residues).

Belongs to the eukaryotic ribosomal protein eS6 family.

This is Small ribosomal subunit protein eS6 from Nitrosopumilus maritimus (strain SCM1).